A 253-amino-acid polypeptide reads, in one-letter code: Cyclin-C1-2 (253 aa).

It belongs to the cyclin family. Cyclin C subfamily.

In Arabidopsis thaliana (Mouse-ear cress), this protein is Cyclin-C1-2 (CYCC1-2).